The following is a 389-amino-acid chain: Inner membrane transport protein YdhP (389 aa).

Over 1–6 (MKINYP) the chain is Cytoplasmic. A helical membrane pass occupies residues 7–27 (LLALAIGAFGIGTTEFSPMGL). Residues 28 to 43 (LPVIARGVDVSIPAAG) are Periplasmic-facing. Residues 44-64 (MLISAYAVGVMVGAPLMTLLL) traverse the membrane as a helical segment. The Cytoplasmic segment spans residues 65-70 (SHRARR). Residues 71 to 91 (SALIFLMAIFTLGNVLSAIAP) form a helical membrane-spanning segment. Over 92–100 (DYMTLMLSR) the chain is Periplasmic. Residues 101 to 121 (ILTSLNHGAFFGLGSVVAASV) traverse the membrane as a helical segment. Over 122 to 130 (VPKHKQASA) the chain is Cytoplasmic. A helical membrane pass occupies residues 131–151 (VATMFMGLTLANIGGVPAATW). Residues 152 to 159 (LGETIGWR) are Periplasmic-facing. Residues 160–180 (MSFLATAGLGVISMVSLFFSL) traverse the membrane as a helical segment. Residues 181 to 203 (PKGGAGARPEVKKELAVLMRPQV) are Cytoplasmic-facing. Residues 204–224 (LSALLTTVLGAGAMFTLYTYI) form a helical membrane-spanning segment. Over 225–236 (SPVLQSITHATP) the chain is Periplasmic. A helical transmembrane segment spans residues 237 to 257 (VFVTAMLVLIGVGFSIGNYLG). At 258–266 (GKLADRSVN) the chain is on the cytoplasmic side. Residues 267-287 (GTLKGFLLLLMVIMLAIPFLA) traverse the membrane as a helical segment. Residues 288 to 290 (RNK) are Periplasmic-facing. Residues 291–311 (FGAAISMAVWGAATFAVVPPL) traverse the membrane as a helical segment. The Cytoplasmic segment spans residues 312-330 (QMRVMRVASEAPGLSSSVN). The helical transmembrane segment at 331 to 351 (IGAFNLGNALGAAAGGAVISA) threads the bilayer. The Periplasmic portion of the chain corresponds to 352-356 (GLGYS). A helical transmembrane segment spans residues 357–377 (FVPVMGAIVAGLALLLVFMSA). Residues 378–389 (RKQPETVCVANS) are Cytoplasmic-facing.

This sequence belongs to the major facilitator superfamily.

It localises to the cell inner membrane. In Escherichia coli O157:H7, this protein is Inner membrane transport protein YdhP (ydhP).